Reading from the N-terminus, the 317-residue chain is tRNA-cytidine(32) 2-sulfurtransferase (317 aa).

Residues 46–51 carry the PP-loop motif motif; it reads SGGKDS. [4Fe-4S] cluster-binding residues include cysteine 121, cysteine 124, and cysteine 212.

The protein belongs to the TtcA family. Homodimer. Mg(2+) is required as a cofactor. [4Fe-4S] cluster serves as cofactor.

The protein resides in the cytoplasm. The enzyme catalyses cytidine(32) in tRNA + S-sulfanyl-L-cysteinyl-[cysteine desulfurase] + AH2 + ATP = 2-thiocytidine(32) in tRNA + L-cysteinyl-[cysteine desulfurase] + A + AMP + diphosphate + H(+). Its pathway is tRNA modification. Functionally, catalyzes the ATP-dependent 2-thiolation of cytidine in position 32 of tRNA, to form 2-thiocytidine (s(2)C32). The sulfur atoms are provided by the cysteine/cysteine desulfurase (IscS) system. The chain is tRNA-cytidine(32) 2-sulfurtransferase from Shewanella loihica (strain ATCC BAA-1088 / PV-4).